A 145-amino-acid chain; its full sequence is D-aminoacyl-tRNA deacylase (145 aa).

A Gly-cisPro motif, important for rejection of L-amino acids motif is present at residues 137 to 138; the sequence is GP.

The protein belongs to the DTD family. As to quaternary structure, homodimer.

It localises to the cytoplasm. The enzyme catalyses glycyl-tRNA(Ala) + H2O = tRNA(Ala) + glycine + H(+). It catalyses the reaction a D-aminoacyl-tRNA + H2O = a tRNA + a D-alpha-amino acid + H(+). Its function is as follows. An aminoacyl-tRNA editing enzyme that deacylates mischarged D-aminoacyl-tRNAs. Also deacylates mischarged glycyl-tRNA(Ala), protecting cells against glycine mischarging by AlaRS. Acts via tRNA-based rather than protein-based catalysis; rejects L-amino acids rather than detecting D-amino acids in the active site. By recycling D-aminoacyl-tRNA to D-amino acids and free tRNA molecules, this enzyme counteracts the toxicity associated with the formation of D-aminoacyl-tRNA entities in vivo and helps enforce protein L-homochirality. The chain is D-aminoacyl-tRNA deacylase from Carboxydothermus hydrogenoformans (strain ATCC BAA-161 / DSM 6008 / Z-2901).